Here is a 1378-residue protein sequence, read N- to C-terminus: Protein CLASP-1 (1378 aa).

One copy of the HEAT 1 repeat lies at 168–206; that stretch reads LIPQLCRLTNDPNSEVRDVSTQCLIDLMVYGGKPIVAKI. Disordered stretches follow at residues 231-254, 266-325, and 590-725; these read RGDL…RNSL, IHPS…TRSS, and MLRD…HQTP. 2 stretches are compositionally biased toward low complexity: residues 269–283 and 610–619; these read SAST…RLST and NQKQQPNQQN. 2 stretches are compositionally biased toward polar residues: residues 620-630 and 637-648; these read ISQKFLSQRSA and IQLSVKPQTTAI. Residues 664–676 show a composition bias toward low complexity; it reads SSTSTSFSAVRSS. Positions 677-690 are enriched in polar residues; it reads GYGQNQSTTPNRAK. A compositionally biased stretch (low complexity) spans 704 to 721; the sequence is TNGNNNNKSSSSSPSTST. Residues 740–767 adopt a coiled-coil conformation; it reads ASLTQEQANCLQNAMNTAKDEMSKNNED. Residues 775 to 784 show a composition bias toward basic and acidic residues; sequence IRKTPPKEVP. The disordered stretch occupies residues 775–823; sequence IRKTPPKEVPRSYNNSPFKPSNLDSSVHRSYNNNSPFRPSSGSVGSGSN. Polar residues predominate over residues 786 to 812; the sequence is SYNNSPFKPSNLDSSVHRSYNNNSPFR. The HEAT 2 repeat unit spans residues 1305 to 1341; that stretch reads HLIVNDVAPCFVTAYESMSSTVRKCAVFGLVALVQRV.

The protein belongs to the CLASP family.

It is found in the cytoplasm. Its subcellular location is the cytoskeleton. Microtubule plus-end tracking protein that promotes the stabilization of dynamic microtubules. Operates redundantly with cls-2 and cls-3 in regulating microtubule processes which position the spindle during asymmetric cell division. The sequence is that of Protein CLASP-1 (cls-1) from Caenorhabditis elegans.